A 306-amino-acid polypeptide reads, in one-letter code: Large ribosomal subunit protein uL2m (306 aa).

The N-terminal 60 residues, 1-60, are a transit peptide targeting the mitochondrion; sequence MALCALTSALRSLSLASAAITARVPTLLPAAQIQSNVLLQLPPALVSPSYRPVHMSADRS.

It belongs to the universal ribosomal protein uL2 family. As to quaternary structure, component of the mitochondrial ribosome large subunit (39S) which comprises a 16S rRNA and about 50 distinct proteins.

The protein localises to the mitochondrion. This Mus musculus (Mouse) protein is Large ribosomal subunit protein uL2m (Mrpl2).